A 123-amino-acid polypeptide reads, in one-letter code: Ribosome-binding factor A (123 aa).

The protein belongs to the RbfA family. As to quaternary structure, monomer. Binds 30S ribosomal subunits, but not 50S ribosomal subunits or 70S ribosomes.

The protein resides in the cytoplasm. In terms of biological role, one of several proteins that assist in the late maturation steps of the functional core of the 30S ribosomal subunit. Associates with free 30S ribosomal subunits (but not with 30S subunits that are part of 70S ribosomes or polysomes). Required for efficient processing of 16S rRNA. May interact with the 5'-terminal helix region of 16S rRNA. The protein is Ribosome-binding factor A of Desulfatibacillum aliphaticivorans.